The following is a 145-amino-acid chain: Mannitol-specific phosphotransferase enzyme IIA component (145 aa).

The PTS EIIA type-2 domain maps to 4-143; that stretch reads TILSTETIKV…QEVLAFLGEV (140 aa). Catalysis depends on His64, which acts as the Tele-phosphohistidine intermediate. Residue His64 is modified to Phosphohistidine; by HPr.

Its subcellular location is the cytoplasm. Its function is as follows. The phosphoenolpyruvate-dependent sugar phosphotransferase system (sugar PTS), a major carbohydrate active transport system, catalyzes the phosphorylation of incoming sugar substrates concomitantly with their translocation across the cell membrane. The enzyme II CmtAB PTS system is involved in D-mannitol transport. The sequence is that of Mannitol-specific phosphotransferase enzyme IIA component (mtlF) from Halalkalibacterium halodurans (strain ATCC BAA-125 / DSM 18197 / FERM 7344 / JCM 9153 / C-125) (Bacillus halodurans).